The sequence spans 263 residues: Acetylglutamate kinase (263 aa).

Substrate contacts are provided by residues 48–49 (GG), arginine 70, and asparagine 162.

This sequence belongs to the acetylglutamate kinase family. ArgB subfamily.

The protein resides in the cytoplasm. The catalysed reaction is N-acetyl-L-glutamate + ATP = N-acetyl-L-glutamyl 5-phosphate + ADP. Its pathway is amino-acid biosynthesis; L-arginine biosynthesis; N(2)-acetyl-L-ornithine from L-glutamate: step 2/4. In terms of biological role, catalyzes the ATP-dependent phosphorylation of N-acetyl-L-glutamate. This Shewanella sediminis (strain HAW-EB3) protein is Acetylglutamate kinase.